The sequence spans 261 residues: 1-(5-phosphoribosyl)-5-[(5-phosphoribosylamino)methylideneamino] imidazole-4-carboxamide isomerase (261 aa).

Catalysis depends on Asp7, which acts as the Proton acceptor. Catalysis depends on Asp129, which acts as the Proton donor.

The protein belongs to the HisA/HisF family.

Its subcellular location is the cytoplasm. The enzyme catalyses 1-(5-phospho-beta-D-ribosyl)-5-[(5-phospho-beta-D-ribosylamino)methylideneamino]imidazole-4-carboxamide = 5-[(5-phospho-1-deoxy-D-ribulos-1-ylimino)methylamino]-1-(5-phospho-beta-D-ribosyl)imidazole-4-carboxamide. Its pathway is amino-acid biosynthesis; L-histidine biosynthesis; L-histidine from 5-phospho-alpha-D-ribose 1-diphosphate: step 4/9. The polypeptide is 1-(5-phosphoribosyl)-5-[(5-phosphoribosylamino)methylideneamino] imidazole-4-carboxamide isomerase (Colwellia psychrerythraea (strain 34H / ATCC BAA-681) (Vibrio psychroerythus)).